Consider the following 844-residue polypeptide: NADPH-Fe(3+) oxidoreductase subunit alpha (844 aa).

The 78-residue stretch at 1–78 (MVSLTIDGKD…GIKVTTQSEK (78 aa)) folds into the 2Fe-2S ferredoxin-type domain. Cysteine 34, cysteine 45, cysteine 48, and cysteine 62 together coordinate [2Fe-2S] cluster. The 4Fe-4S His(Cys)3-ligated-type domain occupies 78–117 (KLSRIRQKIMELMLVNHPLDCPVCDAGGECDLQNACYGLG). [4Fe-4S] cluster is bound by residues histidine 94, cysteine 98, cysteine 101, cysteine 107, cysteine 146, cysteine 149, cysteine 152, cysteine 186, cysteine 189, cysteine 192, cysteine 196, cysteine 222, cysteine 225, cysteine 229, and cysteine 256. 4Fe-4S ferredoxin-type domains are found at residues 137–168 (PLIE…IRVV) and 177–206 (DTVD…SKPF). Positions 215–270 (FTTTPSVCPFCATGCQIEYHSRNGRVERVTSDDSTYNSGNLCINGRFGYSYINSPD) constitute a 4Fe-4S Mo/W bis-MGD-type domain.

As to quaternary structure, heterotetramer with 2 beta subunits. [4Fe-4S] cluster serves as cofactor.

Its subcellular location is the cell inner membrane. Not regulated by FAD or FMN. In terms of biological role, the SfrAB enzymatic complex is probably involved in acetate metabolism and does not participate directly in the reduction of Fe(3+) chelates. May serve as a major route for NADP regeneration. The chain is NADPH-Fe(3+) oxidoreductase subunit alpha (sfrA) from Geobacter sulfurreducens (strain DL-1 / KN400).